Reading from the N-terminus, the 450-residue chain is Ribosomal protein uS12 methylthiotransferase RimO (450 aa).

In terms of domain architecture, MTTase N-terminal spans 9 to 124; the sequence is NRINVVTLGC…LLSALEADYK (116 aa). Residues C18, C53, C87, C148, C152, and C155 each contribute to the [4Fe-4S] cluster site. The region spanning 134–365 is the Radical SAM core domain; the sequence is TTPKNYAYLK…EIQSQISWEL (232 aa). One can recognise a TRAM domain in the interval 367–434; the sequence is QQKIGEVFNV…DFDLYGEPLN (68 aa).

It belongs to the methylthiotransferase family. RimO subfamily. The cofactor is [4Fe-4S] cluster.

The protein localises to the cytoplasm. It carries out the reaction L-aspartate(89)-[ribosomal protein uS12]-hydrogen + (sulfur carrier)-SH + AH2 + 2 S-adenosyl-L-methionine = 3-methylsulfanyl-L-aspartate(89)-[ribosomal protein uS12]-hydrogen + (sulfur carrier)-H + 5'-deoxyadenosine + L-methionine + A + S-adenosyl-L-homocysteine + 2 H(+). In terms of biological role, catalyzes the methylthiolation of an aspartic acid residue of ribosomal protein uS12. The polypeptide is Ribosomal protein uS12 methylthiotransferase RimO (Christiangramia forsetii (strain DSM 17595 / CGMCC 1.15422 / KT0803) (Gramella forsetii)).